We begin with the raw amino-acid sequence, 69 residues long: MPQLNTSTWTLTISLMIISLFCIYQLKMMNQTLIQITPSTEQSKLTKHTLPWEKKWTKIYLPHSSHQQF.

Residues 8–24 (TWTLTISLMIISLFCIY) traverse the membrane as a helical segment. Position 55 is an N6-acetyllysine; alternate (Lys55). N6-succinyllysine; alternate is present on Lys55. At Lys58 the chain carries N6-acetyllysine.

This sequence belongs to the ATPase protein 8 family. As to quaternary structure, F-type ATPases have 2 components, CF(1) - the catalytic core - and CF(0) - the membrane proton channel. Component of an ATP synthase complex composed of ATP5PB, ATP5MC1, ATP5F1E, ATP5PD, ATP5ME, ATP5PF, ATP5MF, MT-ATP6, MT-ATP8, ATP5F1A, ATP5F1B, ATP5F1D, ATP5F1C, ATP5PO, ATP5MG, ATP5MK and ATP5MJ. Interacts with PRICKLE3.

Its subcellular location is the mitochondrion membrane. Mitochondrial membrane ATP synthase (F(1)F(0) ATP synthase or Complex V) produces ATP from ADP in the presence of a proton gradient across the membrane which is generated by electron transport complexes of the respiratory chain. F-type ATPases consist of two structural domains, F(1) - containing the extramembraneous catalytic core and F(0) - containing the membrane proton channel, linked together by a central stalk and a peripheral stalk. During catalysis, ATP synthesis in the catalytic domain of F(1) is coupled via a rotary mechanism of the central stalk subunits to proton translocation. Part of the complex F(0) domain. Minor subunit located with subunit a in the membrane. The chain is ATP synthase protein 8 (MT-ATP8) from Didelphis virginiana (North American opossum).